The chain runs to 420 residues: Caspase-12 (420 aa).

In terms of domain architecture, CARD spans 1 to 92; the sequence is MAAKRTHERD…QLSLQFPSDD (92 aa). Phosphoserine is present on residues S85 and S90. The tract at residues 93–115 is disordered; the sequence is EEDELQKMFTPSSASESRGKVED. Catalysis depends on residues H251 and C299.

The protein belongs to the peptidase C14A family. Heterotetramer that consists of two anti-parallel arranged heterodimers, each one formed by two subunits (Potential). May interact with TRAF2.

Involved in the activation cascade of caspases responsible for apoptosis execution. The chain is Caspase-12 (Casp12) from Rattus norvegicus (Rat).